The following is an 86-amino-acid chain: RNA-binding protein Hfq (86 aa).

Residues 9–68 enclose the Sm domain; that stretch reads DPYLNTLRKEKVPVSIYLVNGIKLQGSIESFDQFVVLLKNTVSQMVYKHAISTVVPARPV. The tract at residues 67 to 86 is disordered; sequence PVRLPSPTDGEHGDSEPGNA. The segment covering 75–86 has biased composition (basic and acidic residues); it reads DGEHGDSEPGNA.

The protein belongs to the Hfq family. As to quaternary structure, homohexamer.

RNA chaperone that binds small regulatory RNA (sRNAs) and mRNAs to facilitate mRNA translational regulation in response to envelope stress, environmental stress and changes in metabolite concentrations. Also binds with high specificity to tRNAs. This is RNA-binding protein Hfq from Pseudomonas putida (strain GB-1).